A 35-amino-acid chain; its full sequence is Photosystem II reaction center protein T (35 aa).

A helical membrane pass occupies residues 3-23 (ALVYTFLLVGTLGIIFFAIFF).

This sequence belongs to the PsbT family. In terms of assembly, PSII is composed of 1 copy each of membrane proteins PsbA, PsbB, PsbC, PsbD, PsbE, PsbF, PsbH, PsbI, PsbJ, PsbK, PsbL, PsbM, PsbT, PsbY, PsbZ, Psb30/Ycf12, at least 3 peripheral proteins of the oxygen-evolving complex and a large number of cofactors. It forms dimeric complexes.

It is found in the plastid. The protein resides in the chloroplast thylakoid membrane. Found at the monomer-monomer interface of the photosystem II (PS II) dimer, plays a role in assembly and dimerization of PSII. PSII is a light-driven water plastoquinone oxidoreductase, using light energy to abstract electrons from H(2)O, generating a proton gradient subsequently used for ATP formation. This chain is Photosystem II reaction center protein T, found in Chaetosphaeridium globosum (Charophycean green alga).